The sequence spans 380 residues: Cystathionine gamma-synthase (380 aa).

Lys195 carries the N6-(pyridoxal phosphate)lysine modification.

This sequence belongs to the trans-sulfuration enzymes family. In terms of assembly, homotetramer. Requires pyridoxal 5'-phosphate as cofactor.

The protein resides in the cytoplasm. It catalyses the reaction O-succinyl-L-homoserine + L-cysteine = L,L-cystathionine + succinate + H(+). Functionally, catalyzes the formation of L-cystathionine from O-succinyl-L-homoserine (OSHS) and L-cysteine, via a gamma-replacement reaction. In the absence of thiol, catalyzes gamma-elimination to form 2-oxobutanoate, succinate and ammonia. The sequence is that of Cystathionine gamma-synthase (metB) from Helicobacter pylori (strain ATCC 700392 / 26695) (Campylobacter pylori).